The sequence spans 712 residues: uncharacterized protein (712 aa).

Disordered stretches follow at residues 1-46 (MAKI…NNLN), 107-264 (NIKP…IPQA), and 370-389 (QPQH…QQNQ). Composition is skewed to low complexity over residues 10-46 (INNS…NNLN), 107-143 (NIKP…SNSS), and 161-173 (TFDN…NSSN). Positions 178–187 (ISPTTSPQLE) are enriched in polar residues. Low complexity-rich tracts occupy residues 188-198 (QHQQYQQQQHQ) and 241-264 (PLQQ…IPQA).

This is an uncharacterized protein from Dictyostelium discoideum (Social amoeba).